The following is a 477-amino-acid chain: 3-isopropylmalate dehydratase large subunit (477 aa).

[4Fe-4S] cluster is bound by residues C352, C413, and C416.

It belongs to the aconitase/IPM isomerase family. LeuC type 1 subfamily. Heterodimer of LeuC and LeuD. [4Fe-4S] cluster is required as a cofactor.

The catalysed reaction is (2R,3S)-3-isopropylmalate = (2S)-2-isopropylmalate. It functions in the pathway amino-acid biosynthesis; L-leucine biosynthesis; L-leucine from 3-methyl-2-oxobutanoate: step 2/4. Functionally, catalyzes the isomerization between 2-isopropylmalate and 3-isopropylmalate, via the formation of 2-isopropylmaleate. This chain is 3-isopropylmalate dehydratase large subunit, found in Pseudomonas putida (strain ATCC 47054 / DSM 6125 / CFBP 8728 / NCIMB 11950 / KT2440).